The following is a 139-amino-acid chain: Protein Turandot B (139 aa).

Positions 1 to 21 (MNFKTALICFALLLIGTLCSA) are cleaved as a signal peptide.

Belongs to the Turandot family.

Its subcellular location is the secreted. A humoral factor that may play a role in stress tolerance. This is Protein Turandot B from Drosophila simulans (Fruit fly).